We begin with the raw amino-acid sequence, 921 residues long: Protein translocase subunit SecA (921 aa).

Residues Gln87, 105–109, and Asp516 contribute to the ATP site; that span reads GEGKT. Residues Cys905, Cys907, Cys916, and His917 each coordinate Zn(2+).

This sequence belongs to the SecA family. Monomer and homodimer. Part of the essential Sec protein translocation apparatus which comprises SecA, SecYEG and auxiliary proteins SecDF-YajC and YidC. Zn(2+) serves as cofactor.

The protein resides in the cell inner membrane. It is found in the cytoplasm. The catalysed reaction is ATP + H2O + cellular proteinSide 1 = ADP + phosphate + cellular proteinSide 2.. In terms of biological role, part of the Sec protein translocase complex. Interacts with the SecYEG preprotein conducting channel. Has a central role in coupling the hydrolysis of ATP to the transfer of proteins into and across the cell membrane, serving both as a receptor for the preprotein-SecB complex and as an ATP-driven molecular motor driving the stepwise translocation of polypeptide chains across the membrane. This chain is Protein translocase subunit SecA, found in Albidiferax ferrireducens (strain ATCC BAA-621 / DSM 15236 / T118) (Rhodoferax ferrireducens).